The chain runs to 206 residues: Ribosomal RNA large subunit methyltransferase E (206 aa).

Residues Gly60, Trp62, Asp80, Asp96, and Asp121 each coordinate S-adenosyl-L-methionine. Catalysis depends on Lys161, which acts as the Proton acceptor.

The protein belongs to the class I-like SAM-binding methyltransferase superfamily. RNA methyltransferase RlmE family.

It localises to the cytoplasm. It carries out the reaction uridine(2552) in 23S rRNA + S-adenosyl-L-methionine = 2'-O-methyluridine(2552) in 23S rRNA + S-adenosyl-L-homocysteine + H(+). In terms of biological role, specifically methylates the uridine in position 2552 of 23S rRNA at the 2'-O position of the ribose in the fully assembled 50S ribosomal subunit. In Nitrosomonas europaea (strain ATCC 19718 / CIP 103999 / KCTC 2705 / NBRC 14298), this protein is Ribosomal RNA large subunit methyltransferase E.